Reading from the N-terminus, the 613-residue chain is V-type proton ATPase catalytic subunit A isoform 2 (613 aa).

An ATP-binding site is contributed by 240 to 247; sequence GAFGCGKT.

The protein belongs to the ATPase alpha/beta chains family. V-ATPase is a heteromultimeric enzyme composed of a peripheral catalytic V1 complex (main components: subunits A, B, C, D, E, and F) attached to an integral membrane V0 proton pore complex (main component: the proteolipid protein).

The enzyme catalyses ATP + H2O + 4 H(+)(in) = ADP + phosphate + 5 H(+)(out). Catalytic subunit of the peripheral V1 complex of vacuolar ATPase. V-ATPase vacuolar ATPase is responsible for acidifying a variety of intracellular compartments in eukaryotic cells. The polypeptide is V-type proton ATPase catalytic subunit A isoform 2 (Acetabularia acetabulum (Mermaid's wine glass)).